Here is a 346-residue protein sequence, read N- to C-terminus: 3 beta-hydroxysteroid dehydrogenase/Delta 5--&gt;4-isomerase (346 aa).

Y147 (proton acceptor) is an active-site residue. K151 serves as a coordination point for NAD(+).

Belongs to the 3-beta-HSD family.

The enzyme catalyses a 3beta-hydroxy-Delta(5)-steroid + NAD(+) = a 3-oxo-Delta(5)-steroid + NADH + H(+). The catalysed reaction is a 3-oxo-Delta(5)-steroid = a 3-oxo-Delta(4)-steroid. It functions in the pathway lipid metabolism; steroid biosynthesis. Functionally, catalyzes the oxidative conversion of Delta(5)-ene-3-beta-hydroxy steroid, and the oxidative conversion of ketosteroids. The 3-beta-HSD enzymatic system plays a crucial role in the biosynthesis of all classes of hormonal steroids. During viral infection, steroid production contributes to virulence by inhibiting the host inflammatory response. This is 3 beta-hydroxysteroid dehydrogenase/Delta 5--&gt;4-isomerase (OPG174) from Monkeypox virus.